Consider the following 506-residue polypeptide: Proline--tRNA ligase (506 aa).

Belongs to the class-II aminoacyl-tRNA synthetase family. ProS type 3 subfamily. Homodimer.

It is found in the cytoplasm. The catalysed reaction is tRNA(Pro) + L-proline + ATP = L-prolyl-tRNA(Pro) + AMP + diphosphate. Catalyzes the attachment of proline to tRNA(Pro) in a two-step reaction: proline is first activated by ATP to form Pro-AMP and then transferred to the acceptor end of tRNA(Pro). In Rhodopirellula baltica (strain DSM 10527 / NCIMB 13988 / SH1), this protein is Proline--tRNA ligase.